An 84-amino-acid chain; its full sequence is Envelope small membrane protein (84 aa).

Over 1-18 (MFMADAYFADTVWYVGQI) the chain is Virion surface. The helical transmembrane segment at 19 to 39 (IFIVAICLLVIIVVVAFLATF) threads the bilayer. At 40-80 (KLCIQLCGMCNTLGLSPSIYVFNRGRQFYEFYNDVKPPVLD) the chain is on the intravirion side.

This sequence belongs to the betacoronaviruses E protein family. As to quaternary structure, homopentamer. Interacts with membrane protein M in the budding compartment of the host cell, which is located between endoplasmic reticulum and the Golgi complex. Interacts with Nucleoprotein.

It is found in the host Golgi apparatus membrane. Plays a central role in virus morphogenesis and assembly. Acts as a viroporin and self-assembles in host membranes forming pentameric protein-lipid pores that allow ion transport. Also plays a role in the induction of apoptosis. The chain is Envelope small membrane protein from Bos taurus (Bovine).